The primary structure comprises 480 residues: 6-phosphogluconate dehydrogenase, decarboxylating 1 (480 aa).

Residues 10-15 (GLAVMG), 33-35 (NRT), 77-79 (VKA), and Asn-105 contribute to the NADP(+) site. Substrate contacts are provided by residues Asn-105 and 131–133 (SGG). Catalysis depends on Lys-186, which acts as the Proton acceptor. Substrate is bound at residue 189-190 (HN). Catalysis depends on Glu-193, which acts as the Proton donor. Tyr-194, Lys-264, Arg-291, Arg-450, and His-456 together coordinate substrate.

It belongs to the 6-phosphogluconate dehydrogenase family. As to quaternary structure, homodimer. As to expression, highly expressed in inflorescence, lowly expressed in root and embryos and almost absent in leaves.

The protein localises to the cytoplasm. It catalyses the reaction 6-phospho-D-gluconate + NADP(+) = D-ribulose 5-phosphate + CO2 + NADPH. The protein operates within carbohydrate degradation; pentose phosphate pathway; D-ribulose 5-phosphate from D-glucose 6-phosphate (oxidative stage): step 3/3. Catalyzes the oxidative decarboxylation of 6-phosphogluconate to ribulose 5-phosphate and CO(2), with concomitant reduction of NADP to NADPH. The polypeptide is 6-phosphogluconate dehydrogenase, decarboxylating 1 (G6PGH1) (Oryza sativa subsp. japonica (Rice)).